Here is a 509-residue protein sequence, read N- to C-terminus: tRNA-2-methylthio-N(6)-dimethylallyladenosine synthase (509 aa).

Positions 1-15 are enriched in polar residues; the sequence is MNEQQRLASQQVNSS. Residues 1–23 are disordered; sequence MNEQQRLASQQVNSSTKKEEKDY. An MTTase N-terminal domain is found at 66–184; the sequence is RKFYIRTYGC…LPYILKDAMF (119 aa). Cysteine 75, cysteine 111, cysteine 145, cysteine 221, cysteine 225, and cysteine 228 together coordinate [4Fe-4S] cluster. One can recognise a Radical SAM core domain in the interval 207–437; sequence RRGDIKAWVN…NALVNKLAIE (231 aa). The TRAM domain maps to 440–503; the sequence is DRYKGQIVEV…TWSLNGELVE (64 aa).

This sequence belongs to the methylthiotransferase family. MiaB subfamily. In terms of assembly, monomer. Requires [4Fe-4S] cluster as cofactor.

The protein localises to the cytoplasm. It catalyses the reaction N(6)-dimethylallyladenosine(37) in tRNA + (sulfur carrier)-SH + AH2 + 2 S-adenosyl-L-methionine = 2-methylsulfanyl-N(6)-dimethylallyladenosine(37) in tRNA + (sulfur carrier)-H + 5'-deoxyadenosine + L-methionine + A + S-adenosyl-L-homocysteine + 2 H(+). Its function is as follows. Catalyzes the methylthiolation of N6-(dimethylallyl)adenosine (i(6)A), leading to the formation of 2-methylthio-N6-(dimethylallyl)adenosine (ms(2)i(6)A) at position 37 in tRNAs that read codons beginning with uridine. This Bacillus anthracis protein is tRNA-2-methylthio-N(6)-dimethylallyladenosine synthase.